The chain runs to 135 residues: Histone H3 (135 aa).

A disordered region spans residues 1-40 (MARTKQTARKSTGGKAPRKAVATKARKTAPPVGGVKKPHR). Residues 19–31 (KAVATKARKTAPP) are compositionally biased toward low complexity.

It belongs to the histone H3 family. As to quaternary structure, the nucleosome is a histone octamer containing two molecules each of H2A, H2B, H3 and H4 assembled in one H3-H4 heterotetramer and two H2A-H2B heterodimers. The octamer wraps approximately 147 bp of DNA.

Its subcellular location is the nucleus. It localises to the chromosome. Functionally, core component of nucleosome. Nucleosomes wrap and compact DNA into chromatin, limiting DNA accessibility to the cellular machineries which require DNA as a template. Histones thereby play a central role in transcription regulation, DNA repair, DNA replication and chromosomal stability. DNA accessibility is regulated via a complex set of post-translational modifications of histones, also called histone code, and nucleosome remodeling. The protein is Histone H3 of Mastigamoeba balamuthi (Phreatamoeba balamuthi).